We begin with the raw amino-acid sequence, 1169 residues long: Pesticidal crystal protein Cry1Gb (1169 aa).

This sequence belongs to the delta endotoxin family.

In terms of biological role, promotes colloidosmotic lysis by binding to the midgut epithelial cells of lepidopteran larvae. Toxic to Pieris rapae. The polypeptide is Pesticidal crystal protein Cry1Gb (cry1Gb) (Bacillus thuringiensis subsp. wuhanensis).